Consider the following 310-residue polypeptide: 26S proteasome non-ATPase regulatory subunit 7 homolog B (310 aa).

M1 is subject to N-acetylmethionine. In terms of domain architecture, MPN spans 17 to 154; the sequence is VIVHPLVLLS…YYAVEEVKEN (138 aa).

This sequence belongs to the peptidase M67A family. In terms of assembly, component of the 19S regulatory particle (RP/PA700) lid subcomplex of the 26S proteasome. The 26S proteasome is composed of a core protease (CP), known as the 20S proteasome, capped at one or both ends by the 19S regulatory particle (RP/PA700). The RP/PA700 complex is composed of at least 17 different subunits in two subcomplexes, the base and the lid, which form the portions proximal and distal to the 20S proteolytic core, respectively.

Acts as a regulatory subunit of the 26S proteasome which is involved in the ATP-dependent degradation of ubiquitinated proteins. This Arabidopsis thaliana (Mouse-ear cress) protein is 26S proteasome non-ATPase regulatory subunit 7 homolog B (RPN8B).